Reading from the N-terminus, the 382-residue chain is Galactokinase (382 aa).

Glu34–Asp37 serves as a coordination point for substrate. Residue Gly124–Ser130 participates in ATP binding. Mg(2+)-binding residues include Ser130 and Glu162. Asp174 functions as the Proton acceptor in the catalytic mechanism. Residue Tyr223 participates in substrate binding.

It belongs to the GHMP kinase family. GalK subfamily.

It localises to the cytoplasm. It carries out the reaction alpha-D-galactose + ATP = alpha-D-galactose 1-phosphate + ADP + H(+). Its pathway is carbohydrate metabolism; galactose metabolism. Its function is as follows. Catalyzes the transfer of the gamma-phosphate of ATP to D-galactose to form alpha-D-galactose-1-phosphate (Gal-1-P). The protein is Galactokinase of Erwinia tasmaniensis (strain DSM 17950 / CFBP 7177 / CIP 109463 / NCPPB 4357 / Et1/99).